Here is a 68-residue protein sequence, read N- to C-terminus: Palustrin-1c (68 aa).

The first 22 residues, 1–22 (MFTTKKSLLLLFFLGTISLSLC), serve as a signal peptide directing secretion. The propeptide occupies 23-39 (EEERGADEEEGDGEKLT). Residues cysteine 62 and cysteine 68 are joined by a disulfide bond.

As to expression, expressed by the skin glands.

It is found in the secreted. In terms of biological role, antimicrobial activity against Gram-negative bacterium E.coli. Stimulates insulin release. The protein is Palustrin-1c of Lithobates palustris (Pickerel frog).